We begin with the raw amino-acid sequence, 323 residues long: Dihydrodiol dehydrogenase 3 (323 aa).

NADP(+)-binding positions include 20 to 24 (GFGTF) and Asp50. Tyr55 acts as the Proton donor in catalysis. His117 serves as a coordination point for substrate. NADP(+)-binding positions include 166-167 (SN), Gln190, 216-221 (YGALGS), and 270-280 (KSYNKKRIKEN).

Belongs to the aldo/keto reductase family.

The protein localises to the cytoplasm. This is Dihydrodiol dehydrogenase 3 from Bos taurus (Bovine).